Reading from the N-terminus, the 146-residue chain is Hemoglobin subunit beta (146 aa).

Positions 2–146 constitute a Globin domain; it reads HWSAEEKQLI…VAHSLARVYH (145 aa). The heme b site is built by His63 and His92.

This sequence belongs to the globin family. As to quaternary structure, heterotetramer of two alpha chains and two beta chains. In terms of tissue distribution, red blood cells.

Involved in oxygen transport from the lung to the various peripheral tissues. This Microcephalophis gracilis (Graceful small-headed sea snake) protein is Hemoglobin subunit beta (HBB).